Here is a 128-residue protein sequence, read N- to C-terminus: Glycine cleavage system H protein (128 aa).

The Lipoyl-binding domain occupies 25-107 (TITVGITHHA…YGAGWFFKIK (83 aa)). The residue at position 66 (K66) is an N6-lipoyllysine.

It belongs to the GcvH family. In terms of assembly, the glycine cleavage system is composed of four proteins: P, T, L and H. (R)-lipoate serves as cofactor.

Functionally, the glycine cleavage system catalyzes the degradation of glycine. The H protein shuttles the methylamine group of glycine from the P protein to the T protein. This is Glycine cleavage system H protein from Neisseria meningitidis serogroup C (strain 053442).